The primary structure comprises 603 residues: Probable GMP synthase [glutamine-hydrolyzing] (603 aa).

Residues 6 to 195 (KIAVVDFGGQ…FIQICGVSKT (190 aa)) enclose the Glutamine amidotransferase type-1 domain. The active-site Nucleophile is cysteine 81. Catalysis depends on residues histidine 170 and glutamate 172. The region spanning 196–392 (WGIDQFLKEK…LGLESEWVGR (197 aa)) is the GMPS ATP-PPase domain. 224-230 (SGGVDST) contributes to the ATP binding site.

As to quaternary structure, homodimer.

It catalyses the reaction XMP + L-glutamine + ATP + H2O = GMP + L-glutamate + AMP + diphosphate + 2 H(+). The protein operates within purine metabolism; GMP biosynthesis; GMP from XMP (L-Gln route): step 1/1. Functionally, catalyzes the synthesis of GMP from XMP. This is Probable GMP synthase [glutamine-hydrolyzing] (guaA) from Leptospira interrogans serogroup Icterohaemorrhagiae serovar copenhageni (strain Fiocruz L1-130).